The primary structure comprises 319 residues: Tetrahydromethanopterin S-methyltransferase subunit H (319 aa).

This sequence belongs to the MtrH family. In terms of assembly, the complex is composed of 8 subunits; MtrA, MtrB, MtrC, MtrD, MtrE, MtrF, MtrG and MtrH.

It carries out the reaction 5-methyl-5,6,7,8-tetrahydromethanopterin + coenzyme M + 2 Na(+)(in) = 5,6,7,8-tetrahydromethanopterin + methyl-coenzyme M + 2 Na(+)(out). It functions in the pathway one-carbon metabolism; methanogenesis from CO(2); methyl-coenzyme M from 5,10-methylene-5,6,7,8-tetrahydromethanopterin: step 2/2. In terms of biological role, part of a complex that catalyzes the formation of methyl-coenzyme M and tetrahydromethanopterin from coenzyme M and methyl-tetrahydromethanopterin. This is an energy-conserving, sodium-ion translocating step. MtrH catalyzes the transfer of the methyl group from methyl-tetrahydromethanopterin to the corrinoid prosthetic group of MtrA. The chain is Tetrahydromethanopterin S-methyltransferase subunit H from Methanocaldococcus jannaschii (strain ATCC 43067 / DSM 2661 / JAL-1 / JCM 10045 / NBRC 100440) (Methanococcus jannaschii).